The chain runs to 200 residues: Charged multivesicular body protein 6 (200 aa).

A lipid anchor (N-myristoyl glycine) is attached at Gly-2. A coiled-coil region spans residues 10 to 145; sequence QSRVTEQDRA…YQRQIDELLA (136 aa). A Phosphoserine modification is found at Ser-119. The residue at position 130 (Thr-130) is a Phosphothreonine. Positions 168-179 match the Type-2 MIT-interacting motif motif; that stretch reads MELPEVPSEPLP. A disordered region spans residues 168–200; sequence MELPEVPSEPLPDRNPEAPAKARSRQAELVAAS.

The protein belongs to the SNF7 family. Probable core component of the endosomal sorting required for transport complex III (ESCRT-III). ESCRT-III components are thought to multimerize to form a flat lattice on the perimeter membrane of the endosome. Several assembly forms of ESCRT-III may exist that interact and act sequentially. Interacts with VPS4A; the interaction is direct. Interacts with VPS4B; the interaction is direct. Interacts with CHMP4A, CHMP4B and CHMP4C. Interacts with SNF8, VPS25 and VPS36. ISGylated in a CHMP5-dependent manner. Isgylation weakens its interaction with VPS4A.

The protein resides in the endomembrane system. It localises to the endosome membrane. Its subcellular location is the late endosome membrane. The protein localises to the membrane. Its function is as follows. Probable core component of the endosomal sorting required for transport complex III (ESCRT-III) which is involved in multivesicular bodies (MVBs) formation and sorting of endosomal cargo proteins into MVBs. MVBs contain intraluminal vesicles (ILVs) that are generated by invagination and scission from the limiting membrane of the endosome and mostly are delivered to lysosomes enabling degradation of membrane proteins, such as stimulated growth factor receptors, lysosomal enzymes and lipids. The MVB pathway appears to require the sequential function of ESCRT-O, -I,-II and -III complexes. ESCRT-III proteins mostly dissociate from the invaginating membrane before the ILV is released. The ESCRT machinery also functions in topologically equivalent membrane fission events, such as the terminal stages of cytokinesis. ESCRT-III proteins are believed to mediate the necessary vesicle extrusion and/or membrane fission activities, possibly in conjunction with the AAA ATPase VPS4. In the ESCRT-III complex, it probably serves as an acceptor for the ESCRT-II complex on endosomal membranes. In Mus musculus (Mouse), this protein is Charged multivesicular body protein 6 (Chmp6).